The sequence spans 423 residues: Adenylosuccinate synthetase (423 aa).

Residues 12–18 (GDEGKGK) and 40–42 (GHT) contribute to the GTP site. D13 functions as the Proton acceptor in the catalytic mechanism. Residues D13 and G40 each coordinate Mg(2+). IMP-binding positions include 13 to 16 (DEGK), 38 to 41 (NAGH), T129, R143, Q221, T236, and R300. H41 (proton donor) is an active-site residue. A substrate-binding site is contributed by 296–302 (AVTGRER). GTP is bound by residues R302, 328 to 330 (KSD), and 408 to 410 (SVG).

The protein belongs to the adenylosuccinate synthetase family. In terms of assembly, homodimer. It depends on Mg(2+) as a cofactor.

The protein localises to the cytoplasm. It catalyses the reaction IMP + L-aspartate + GTP = N(6)-(1,2-dicarboxyethyl)-AMP + GDP + phosphate + 2 H(+). It participates in purine metabolism; AMP biosynthesis via de novo pathway; AMP from IMP: step 1/2. Plays an important role in the de novo pathway of purine nucleotide biosynthesis. Catalyzes the first committed step in the biosynthesis of AMP from IMP. In Phocaeicola vulgatus (strain ATCC 8482 / DSM 1447 / JCM 5826 / CCUG 4940 / NBRC 14291 / NCTC 11154) (Bacteroides vulgatus), this protein is Adenylosuccinate synthetase.